The primary structure comprises 314 residues: Transcription factor TCP20 (314 aa).

Disordered regions lie at residues 1–91 (MDPK…RGRR) and 295–314 (NHEE…GSGR). Composition is skewed to basic and acidic residues over residues 38 to 49 (DENRKPTTEIKD) and 77 to 89 (SNKD…EGRG). The TCP domain occupies 78–132 (NKDRHTKVEGRGRRIRMPALCAARIFQLTRELGHKSDGETIQWLLQQAEPSIIAA).

Interacts with PURA1. Interacts with SPL.

Its subcellular location is the nucleus. Its function is as follows. Transcription factor that binds to the site II motif (3'-TGGGCC/T-5') in the promoter of PCNA-2 and to 3'-GCCCG/A-5' elements in the promoters of cyclin CYCB1-1 and ribosomal protein genes. The chain is Transcription factor TCP20 (TCP20) from Arabidopsis thaliana (Mouse-ear cress).